The sequence spans 762 residues: Chondroadherin-like protein (762 aa).

A signal peptide spans 1–30; sequence MEGPRSSTHVPLVLPLLVLLLLAPARQAAA. Positions 31–62 constitute an LRRNT 1 domain; the sequence is QRCPQACICDNSRRHVACRYQNLTEVPDAIPE. The N-linked (GlcNAc...) asparagine glycan is linked to asparagine 52. LRR repeat units follow at residues 87-108, 111-132, 135-156, 159-180, 183-204, 207-228, 231-252, 255-276, and 279-300; these read HLTH…AFRG, RLLL…ALDG, SLRR…TFGA, ALAT…AFQG, RVRW…ALAG, ALRR…VLSQ, GLAR…DGLA, GLRE…AFAH, and RLHT…QGPG. Residues 310–359 form the LRRCT 1 domain; sequence NPLWCGCQARPLLEWLARARVRSDGACQGPRRLRGEALDALRPWDLRCPG. The interval 364–390 is disordered; sequence EEEELEERAVAGPRAPPRGPPRGPGEE. A compositionally biased stretch (pro residues) spans 377-386; that stretch reads RAPPRGPPRG. The region spanning 387–425 is the LRRNT 2 domain; sequence PGEERAVAPCPRACVCVPESRHSSCEGCGLQAVPRGFPS. A disulfide bridge links cysteine 396 with cysteine 411. LRR repeat units lie at residues 426–447, 450–471, 474–495, 498–519, 522–543, 546–566, 570–591, 594–615, 619–640, and 644–665; these read DTQL…AFPG, HLVS…ALAG, RLIY…ALEG, RLGY…ALRA, SLFS…DLGR, ALRW…GALG, ELEK…ALEG, ALLE…AFQP, SLQH…AFSG, and GLQS…PSLS. N-linked (GlcNAc...) asparagine glycosylation occurs at asparagine 626. The LRRCT 2 domain maps to 675–724; that stretch reads NPFHCDCQLLPLHRWLTGLNLRVGATCATPPNARGQRVKAAAAVFEDCPG. Intrachain disulfides connect cysteine 679-cysteine 722 and cysteine 681-cysteine 701. Over residues 728 to 745 the composition is skewed to basic residues; the sequence is RKAKRTPASRPSARRTPI. The disordered stretch occupies residues 728–762; that stretch reads RKAKRTPASRPSARRTPIKGRQCGADKVGKEKGRL.

This sequence belongs to the small leucine-rich proteoglycan (SLRP) family. SLRP class IV subfamily. Associates with collagen and binds to collagen fibrils.

The protein resides in the secreted. It is found in the extracellular space. Its subcellular location is the extracellular matrix. Potential negative modulator of chondrocyte differentiation. Inhibits collagen fibrillogenesis in vitro. May influence chondrocyte's differentiation by acting on its cellular collagenous microenvironment. The protein is Chondroadherin-like protein (CHADL) of Homo sapiens (Human).